The following is a 370-amino-acid chain: Protein phosphatase 2C homolog 2 (370 aa).

Residues 23-291 form the PPM-type phosphatase domain; that stretch reads HFGVSHMQGW…DNMTICIVAF (269 aa). Residues D63, G64, D233, and D282 each coordinate Mn(2+). S355 and S357 each carry phosphoserine.

The protein belongs to the PP2C family. In terms of assembly, monomer. The cofactor is Mg(2+). Mn(2+) is required as a cofactor.

The protein resides in the nucleus. The protein localises to the cytoplasm. It localises to the cytosol. The catalysed reaction is O-phospho-L-seryl-[protein] + H2O = L-seryl-[protein] + phosphate. It carries out the reaction O-phospho-L-threonyl-[protein] + H2O = L-threonyl-[protein] + phosphate. Its activity is regulated as follows. Activity is reduced when phosphosrylated at Ser-355/Ser-357. In terms of biological role, dephosphorylating regulator for many key proteins. Has an important role in osmotic stability and cell shape control. It may negatively regulate the osmosensing signal transmitted through wis1 map kinase. This is Protein phosphatase 2C homolog 2 (ptc2) from Schizosaccharomyces pombe (strain 972 / ATCC 24843) (Fission yeast).